Here is a 194-residue protein sequence, read N- to C-terminus: Imidazoleglycerol-phosphate dehydratase (194 aa).

Belongs to the imidazoleglycerol-phosphate dehydratase family.

The protein localises to the cytoplasm. It carries out the reaction D-erythro-1-(imidazol-4-yl)glycerol 3-phosphate = 3-(imidazol-4-yl)-2-oxopropyl phosphate + H2O. It functions in the pathway amino-acid biosynthesis; L-histidine biosynthesis; L-histidine from 5-phospho-alpha-D-ribose 1-diphosphate: step 6/9. The chain is Imidazoleglycerol-phosphate dehydratase from Listeria monocytogenes serovar 1/2a (strain ATCC BAA-679 / EGD-e).